We begin with the raw amino-acid sequence, 148 residues long: Putative cyclin-dependent kinase inhibitor SPL2 (148 aa).

2 positions are modified to phosphoserine: Ser-59 and Ser-86.

Its subcellular location is the cytoplasmic granule. It is found in the cytoplasm. Putative cyclin-dependent kinase (CDK) inhibitor necessary and sufficient for PHO pathway-dependent down-regulation of low-affinity phosphate transport. This Saccharomyces cerevisiae (strain YJM789) (Baker's yeast) protein is Putative cyclin-dependent kinase inhibitor SPL2 (SPL2).